A 193-amino-acid chain; its full sequence is Protein SINE3 (193 aa).

The tract at residues 15-35 (SELGAKRLKDPEMKNRKVTTE) is disordered. Residues 18 to 35 (GAKRLKDPEMKNRKVTTE) are compositionally biased toward basic and acidic residues. The 39-residue stretch at 155-193 (VTVKFRIVLLSFILWAILAAIVVFFSSGEERAYRGPLPT) folds into the KASH domain. Residues 161–181 (IVLLSFILWAILAAIVVFFSS) traverse the membrane as a helical segment. The Required for nuclear localization signature appears at 190 to 193 (PLPT).

As to quaternary structure, interacts with SUN1 and SUN2.

The protein resides in the nucleus membrane. The polypeptide is Protein SINE3 (Arabidopsis thaliana (Mouse-ear cress)).